We begin with the raw amino-acid sequence, 512 residues long: Gamma-aminobutyric acid receptor subunit beta-2 (512 aa).

A signal peptide spans 1 to 25 (MWRVRKRGYFGIWSFPLIIAAVCAQ). Topologically, residues 26-244 (SVNDPSNMSL…SFKLKRNIGY (219 aa)) are extracellular. Residues N32 and N104 are each glycosylated (N-linked (GlcNAc...) asparagine). Y121 lines the histamine pocket. Residues C160 and C174 are joined by a disulfide bond. N173 carries an N-linked (GlcNAc...) asparagine glycan. Histamine-binding positions include 180–181 (SY) and T226. 4-aminobutanoate is bound by residues Y181 and T226. The next 3 membrane-spanning stretches (helical) occupy residues 245-266 (FILQ…SFWI), 270-292 (ASAA…NTHL), and 304-326 (AIDM…YALV). At 327-489 (NYIFFGRGPQ…DLTDVNAIDR (163 aa)) the chain is on the cytoplasmic side. At Y441 the chain carries Phosphotyrosine. The helical transmembrane segment at 490–511 (WSRIFFPVVFSFFNIVYWLYYV) threads the bilayer.

It belongs to the ligand-gated ion channel (TC 1.A.9) family. Gamma-aminobutyric acid receptor (TC 1.A.9.5) subfamily. GABRB2 sub-subfamily. As to quaternary structure, heteropentamer, formed by a combination of alpha (GABRA1-6), beta (GABRB1-3), gamma (GABRG1-3), delta (GABRD), epsilon (GABRE), rho (GABRR1-3), pi (GABRP) and theta (GABRQ) chains, each subunit exhibiting distinct physiological and pharmacological properties. Interacts with UBQLN1. May interact with KIF21B. Identified in a complex of 720 kDa composed of LHFPL4, NLGN2, GABRA1, GABRB2, GABRG2 and GABRB3. Glycosylated.

It localises to the postsynaptic cell membrane. The protein localises to the cell membrane. The protein resides in the cytoplasmic vesicle. It carries out the reaction chloride(in) = chloride(out). Allosterically activated by benzodiazepines and the anesthetic etomidate. Inhibited by the antagonist bicuculline. Potentiated by histamine. Beta subunit of the heteropentameric ligand-gated chloride channel gated by gamma-aminobutyric acid (GABA), a major inhibitory neurotransmitter in the brain. GABA-gated chloride channels, also named GABA(A) receptors (GABAAR), consist of five subunits arranged around a central pore and contain GABA active binding site(s) located at the alpha and beta subunit interface(s). When activated by GABA, GABAARs selectively allow the flow of chloride anions across the cell membrane down their electrochemical gradient. Chloride influx into the postsynaptic neuron following GABAAR opening decreases the neuron ability to generate a new action potential, thereby reducing nerve transmission. GABAARs containing alpha-1 and beta-2 or -3 subunits exhibit synaptogenic activity; the gamma-2 subunit being necessary but not sufficient to induce rapid synaptic contacts formation. Extrasynaptic beta-2 receptors contribute to the tonic GABAergic inhibition. Beta-containing GABAARs can simultaneously bind GABA and histamine where histamine binds at the interface of two neighboring beta subunits, which may be involved in the regulation of sleep and wakefulness. In Mus musculus (Mouse), this protein is Gamma-aminobutyric acid receptor subunit beta-2.